We begin with the raw amino-acid sequence, 130 residues long: WAP four-disulfide core domain protein 3 (130 aa).

Positions 1–16 (MKALLALGFLASWVAA) are cleaved as a signal peptide. 2 WAP domains span residues 17 to 61 (GEHA…RGDI) and 62 to 106 (EGGR…IPGL). Cystine bridges form between C25/C49, C32/C53, C36/C48, C42/C57, C69/C94, C77/C98, C81/C93, and C87/C102. A glycan (N-linked (GlcNAc...) asparagine) is linked at N116.

It is found in the secreted. The polypeptide is WAP four-disulfide core domain protein 3 (Wfdc3) (Mus musculus (Mouse)).